The following is a 494-amino-acid chain: MDASTLFKKVKVKRVLGSLEQQIDDITTDSRTAREGSIFVASVGYTVDSHKFCQSVADQGCKLVVVNKEQSLPANVTQVVVPDTLRVASILAHTLYDYPSHQLVTFGVTGTNGKTSIATMIHLIQRKLQKNSAYLGTNGFQINETKTKGANTTPETVSLTKKIKEAVDAGAESMTLEVSSHGLVLGRLRGVEFDVAIFSNLTQDHLDFHGTMEAYGHAKSLLFSQLGEDLSKEKYVVLNNDDSFSEYLRTVTPYEVFSYGIDEEAQFMAKNIQESLQGVSFDFVTPFGTYSVKSPYVGKFNISNIMAAMIAVWSKGTSLETIIKAVENLEPVEGRLEVLDPSLPIDLIIDYAHTADGMNKLIDAVQPFVKQKLIFLVGMAGERDLTKTPEMGRVACRADYVIFTPDNPANDDPKMLTAELAKGATHQNYIEFDDRAEGIKHAIDIAEPGDTVVLASKGREPYQIMPGHIKVPHRDDLIGLEAAYKKFGGGPVGQ.

S30 is a binding site for UDP-N-acetyl-alpha-D-muramoyl-L-alanyl-D-glutamate. Residue 110 to 116 (GTNGKTS) coordinates ATP. Residues 152 to 153 (TT), S179, and R187 contribute to the UDP-N-acetyl-alpha-D-muramoyl-L-alanyl-D-glutamate site. At K219 the chain carries N6-carboxylysine. The L-lysine recognition motif motif lies at 406-409 (DNPA).

Belongs to the MurCDEF family. MurE subfamily. Carboxylation is probably crucial for Mg(2+) binding and, consequently, for the gamma-phosphate positioning of ATP.

The protein localises to the cytoplasm. It catalyses the reaction UDP-N-acetyl-alpha-D-muramoyl-L-alanyl-D-glutamate + L-lysine + ATP = UDP-N-acetyl-alpha-D-muramoyl-L-alanyl-gamma-D-glutamyl-L-lysine + ADP + phosphate + H(+). The protein operates within cell wall biogenesis; peptidoglycan biosynthesis. Functionally, catalyzes the addition of L-lysine to the nucleotide precursor UDP-N-acetylmuramoyl-L-alanyl-D-glutamate (UMAG) in the biosynthesis of bacterial cell-wall peptidoglycan. The protein is UDP-N-acetylmuramoyl-L-alanyl-D-glutamate--L-lysine ligase of Staphylococcus aureus (strain MW2).